Consider the following 370-residue polypeptide: tRNA-specific 2-thiouridylase MnmA (370 aa).

ATP-binding positions include 9-16 (GLSGGVDS) and Met-35. The segment at 95-97 (NPD) is interaction with target base in tRNA. The active-site Nucleophile is Cys-100. Cysteines 100 and 198 form a disulfide. Gly-124 contacts ATP. The segment at 148 to 150 (KDQ) is interaction with tRNA. Cys-198 acts as the Cysteine persulfide intermediate in catalysis. Positions 316-317 (RY) are interaction with tRNA.

The protein belongs to the MnmA/TRMU family.

The protein resides in the cytoplasm. The catalysed reaction is S-sulfanyl-L-cysteinyl-[protein] + uridine(34) in tRNA + AH2 + ATP = 2-thiouridine(34) in tRNA + L-cysteinyl-[protein] + A + AMP + diphosphate + H(+). Catalyzes the 2-thiolation of uridine at the wobble position (U34) of tRNA, leading to the formation of s(2)U34. In Acidovorax ebreus (strain TPSY) (Diaphorobacter sp. (strain TPSY)), this protein is tRNA-specific 2-thiouridylase MnmA.